A 310-amino-acid polypeptide reads, in one-letter code: ADP-L-glycero-D-manno-heptose-6-epimerase (310 aa).

NADP(+) contacts are provided by residues 10-11, 31-32, Lys38, Lys53, 75-79, and Asn92; these read FI, DN, and EGACS. Tyr140 acts as the Proton acceptor in catalysis. An NADP(+)-binding site is contributed by Lys144. Asn169 is a substrate binding site. 2 residues coordinate NADP(+): Val170 and Lys178. The active-site Proton acceptor is Lys178. Residues Ser180, His187, 201-204, Arg209, and Tyr272 each bind substrate; that span reads FEGS.

It belongs to the NAD(P)-dependent epimerase/dehydratase family. HldD subfamily. As to quaternary structure, homopentamer. Requires NADP(+) as cofactor.

It carries out the reaction ADP-D-glycero-beta-D-manno-heptose = ADP-L-glycero-beta-D-manno-heptose. The protein operates within nucleotide-sugar biosynthesis; ADP-L-glycero-beta-D-manno-heptose biosynthesis; ADP-L-glycero-beta-D-manno-heptose from D-glycero-beta-D-manno-heptose 7-phosphate: step 4/4. In terms of biological role, catalyzes the interconversion between ADP-D-glycero-beta-D-manno-heptose and ADP-L-glycero-beta-D-manno-heptose via an epimerization at carbon 6 of the heptose. This Klebsiella pneumoniae subsp. pneumoniae (strain ATCC 700721 / MGH 78578) protein is ADP-L-glycero-D-manno-heptose-6-epimerase.